The chain runs to 47 residues: Large ribosomal subunit protein bL34 (47 aa).

The protein belongs to the bacterial ribosomal protein bL34 family.

This Mycolicibacterium vanbaalenii (strain DSM 7251 / JCM 13017 / BCRC 16820 / KCTC 9966 / NRRL B-24157 / PYR-1) (Mycobacterium vanbaalenii) protein is Large ribosomal subunit protein bL34.